The following is a 240-amino-acid chain: Homeobox protein DLX-4 (240 aa).

The disordered stretch occupies residues 80–120; the sequence is QPLCGPAEHPQELEADSEKPRLSPEPSERRPQAPAKKLRKP. The span at 88–110 shows a compositional bias: basic and acidic residues; sequence HPQELEADSEKPRLSPEPSERRP. The homeobox DNA-binding region spans 117–176; sequence LRKPRTIYSSLQLQHLNQRFQHTQYLALPERAQLAAQLGLTQTQVKIWFQNKRSKYKKLL.

Belongs to the distal-less homeobox family. As to expression, expressed in leukemia cells and placenta. Also expressed in kidney and fetal liver.

Its subcellular location is the nucleus. In terms of biological role, may play a role in determining the production of hemoglobin S. May act as a repressor. During embryonic development, plays a role in palatogenesis. The protein is Homeobox protein DLX-4 (DLX4) of Homo sapiens (Human).